The following is a 24-amino-acid chain: Neurotoxin-2 (24 aa).

One can recognise an LCN-type CS-alpha/beta domain in the interval 1–24; the sequence is EDGYLLNRDTGCKVSCGTCRYCND.

This sequence belongs to the long (4 C-C) scorpion toxin superfamily. Sodium channel inhibitor family. Alpha subfamily. As to expression, expressed by the venom gland.

The protein resides in the secreted. Its function is as follows. Binds to sodium channels (Nav) and inhibits the inactivation of the activated channels, thereby blocking neuronal transmission. This toxin is active against mammals. In Hottentotta tamulus (Eastern Indian scorpion), this protein is Neurotoxin-2.